The sequence spans 442 residues: Trigger factor (442 aa).

The 84-residue stretch at Gly176–Pro259 folds into the PPIase FKBP-type domain.

The protein belongs to the FKBP-type PPIase family. Tig subfamily.

The protein localises to the cytoplasm. It carries out the reaction [protein]-peptidylproline (omega=180) = [protein]-peptidylproline (omega=0). Functionally, involved in protein export. Acts as a chaperone by maintaining the newly synthesized protein in an open conformation. Functions as a peptidyl-prolyl cis-trans isomerase. The protein is Trigger factor of Chlamydia trachomatis serovar L2 (strain ATCC VR-902B / DSM 19102 / 434/Bu).